Here is a 244-residue protein sequence, read N- to C-terminus: Histone H1, orphon (244 aa).

A compositionally biased stretch (low complexity) spans 1 to 21; it reads MSDPAPEIEAPVEAAPVASPP. Disordered stretches follow at residues 1 to 59 and 113 to 244; these read MSDP…PVSE and QAKG…KKAK. Residues 35-45 show a composition bias toward basic and acidic residues; sequence PKAEKPKSDKP. The 75-residue stretch at 53–127 folds into the H15 domain; it reads THPPVSEMVV…GASGSFKLPP (75 aa). Positions 186–203 are enriched in low complexity; it reads AKPASKKAAAPKPKAAKP. Positions 213 to 244 are enriched in basic residues; that stretch reads ATKAAAKKPVAKPVAKKPAAKPAKKPAAKKAK.

It belongs to the histone H1/H5 family.

The protein localises to the nucleus. Its subcellular location is the chromosome. In terms of biological role, histones H1 are necessary for the condensation of nucleosome chains into higher-order structures. The chain is Histone H1, orphon from Chironomus thummi thummi (Midge).